An 84-amino-acid chain; its full sequence is Small ribosomal subunit protein uS17 (84 aa).

Belongs to the universal ribosomal protein uS17 family. Part of the 30S ribosomal subunit.

In terms of biological role, one of the primary rRNA binding proteins, it binds specifically to the 5'-end of 16S ribosomal RNA. In Citrobacter koseri (strain ATCC BAA-895 / CDC 4225-83 / SGSC4696), this protein is Small ribosomal subunit protein uS17.